The sequence spans 110 residues: Large ribosomal subunit protein P2 (110 aa).

Ser59 is subject to O-(pantetheine 4'-phosphoryl)serine; in acyl carrier protein form. Residues 62-110 (LASVPSGGAAPAAAAGGAAAGGAAEEKAEDKPAEKDEESDDDMGFGLFD) form a disordered region. A compositionally biased stretch (low complexity) spans 63–84 (ASVPSGGAAPAAAAGGAAAGGA). The segment covering 85-95 (AEEKAEDKPAE) has biased composition (basic and acidic residues). Ser100 carries the phosphoserine; in ribosomal stalk form modification.

It belongs to the eukaryotic ribosomal protein P1/P2 family. As to quaternary structure, the phosphorylated form is part of the ribosomal stalk involved in the interaction of the elongation factors with the ribosome during protein synthesis. The phosphopantetheinylated form is part of the 10S triacylglycerol biosynthetic complex involved in de novo fatty acid biosynthesis. In terms of processing, 4'-phosphopantetheine is transferred from CoA to a specific serine by acpS. This modification is essential for activity because fatty acids are bound in thioester linkage to the sulfhydryl of the prosthetic group.

Its subcellular location is the cytoplasm. Functionally, probable bifunctional protein. The phosphorylated protein plays an important role in the elongation step of protein synthesis. The phosphopantetheinylated protein acts as an acyl carrier protein. This Rhodotorula glutinis (Yeast) protein is Large ribosomal subunit protein P2.